Here is a 950-residue protein sequence, read N- to C-terminus: Protein lin-54 homolog (950 aa).

5 disordered regions span residues 1–63 (MDTS…DSLN), 366–387 (NASATSSTTHTTGGQTPSTSSG), 500–523 (ASKPASAASSSATPSASQELPRKH), 533–552 (KQSASVSSEASDSSDAGPEA), and 638–702 (VENK…LPPG). Residues 10-26 (SLDDTEPLPELSFEDFL) show a composition bias toward acidic residues. Over residues 29–39 (TSEKSSQHMEI) the composition is skewed to basic and acidic residues. The segment covering 40-55 (EALDSEEDNIGGEDLA) has biased composition (acidic residues). 4 stretches are compositionally biased toward low complexity: residues 366 to 386 (NASATSSTTHTTGGQTPSTSS), 500 to 516 (ASKPASAASSSATPSAS), 535 to 548 (SASVSSEASDSSDA), and 661 to 682 (QQQSKHQQLQAQAKQRIRQQQL). Positions 737-849 (RRKHCNCSKS…KCVGCRNMED (113 aa)) constitute a CRC domain.

This sequence belongs to the lin-54 family. Component of the DREAM complex at least composed of Myb, Caf1-55, mip40, mip120, mip130, E2f2, Dp, Rbf, Rbf2, lin-52, HDAC1/Rpd3 and l(3)mbt.

The protein localises to the nucleus. Component of the DREAM complex, a multiprotein complex that can both act as a transcription activator or repressor depending on the context. In follicle cells, the complex plays a central role in the site-specific DNA replication at the chorion loci. During development, the complex represses transcription of developmentally controlled E2F target genes. The chain is Protein lin-54 homolog (mip120) from Drosophila melanogaster (Fruit fly).